The chain runs to 245 residues: Alpha carbonic anhydrase 2 (245 aa).

The signal sequence occupies residues methionine 1–cysteine 23. The Alpha-carbonic anhydrase domain maps to histidine 37–threonine 245. An intrachain disulfide couples cysteine 62 to cysteine 222. A glycan (N-linked (GlcNAc...) asparagine) is linked at asparagine 95. Histidine 103 serves as the catalytic Proton acceptor. N-linked (GlcNAc...) asparagine glycosylation is present at asparagine 120. The Zn(2+) site is built by histidine 130, histidine 132, and histidine 149. An N-linked (GlcNAc...) asparagine glycan is attached at asparagine 156. Threonine 218–threonine 219 lines the substrate pocket.

The protein belongs to the alpha-class carbonic anhydrase family. It depends on Zn(2+) as a cofactor. Post-translationally, N-glycosylated. In terms of tissue distribution, expressed in stems and roots.

Its subcellular location is the plastid. It localises to the chloroplast stroma. The enzyme catalyses hydrogencarbonate + H(+) = CO2 + H2O. Its function is as follows. Reversible hydration of carbon dioxide. This Arabidopsis thaliana (Mouse-ear cress) protein is Alpha carbonic anhydrase 2 (ACA2).